Here is an 833-residue protein sequence, read N- to C-terminus: AdoMet-dependent rRNA methyltransferase SPB1 (833 aa).

Residues Gly59, Trp61, Asp79, Asp95, and Asp120 each coordinate S-adenosyl-L-methionine. The active-site Proton acceptor is the Lys160. Coiled-coil stretches lie at residues 348 to 389 (EEEQ…QLNM) and 453 to 481 (RDEL…SERD). Positions 477 to 493 (KSERDAKFRAKQARESS) are enriched in basic and acidic residues. Disordered regions lie at residues 477-532 (KSER…SDDD), 592-645 (KRKL…EKHS), and 776-810 (VTKK…GKYK). Composition is skewed to acidic residues over residues 505–532 (QSDE…SDDD) and 622–634 (EDGD…DSEE). The segment covering 635–645 (EAKRTKQEKHS) has biased composition (basic and acidic residues). Residues 730–782 (AEAKARKKHRAVARLEKLKKKAGLINDDSDKSEKDKAEEIAKLMRKVTKKAKQ) are a coiled coil.

Belongs to the class I-like SAM-binding methyltransferase superfamily. RNA methyltransferase RlmE family. SPB1 subfamily. In terms of assembly, component of the nucleolar and nucleoplasmic pre-60S ribosomal particle.

It localises to the nucleus. Its subcellular location is the nucleolus. The catalysed reaction is a ribonucleotide in rRNA + S-adenosyl-L-methionine = a 2'-O-methylribonucleotide in rRNA + S-adenosyl-L-homocysteine + H(+). Its function is as follows. Required for proper assembly of pre-ribosomal particles during the biogenesis of the 60S ribosomal subunit. The polypeptide is AdoMet-dependent rRNA methyltransferase SPB1 (Kluyveromyces lactis (strain ATCC 8585 / CBS 2359 / DSM 70799 / NBRC 1267 / NRRL Y-1140 / WM37) (Yeast)).